Consider the following 31-residue polypeptide: Photosystem II reaction center protein T (31 aa).

The helical transmembrane segment at 3–23 (SLVYIFVFVVALGVLFFAIAF) threads the bilayer.

Belongs to the PsbT family. In terms of assembly, PSII is composed of 1 copy each of membrane proteins PsbA, PsbB, PsbC, PsbD, PsbE, PsbF, PsbH, PsbI, PsbJ, PsbK, PsbL, PsbM, PsbT, PsbX, PsbY, PsbZ, Psb30/Ycf12, peripheral proteins PsbO, CyanoQ (PsbQ), PsbU, PsbV and a large number of cofactors. It forms dimeric complexes.

It localises to the cellular thylakoid membrane. In terms of biological role, found at the monomer-monomer interface of the photosystem II (PS II) dimer, plays a role in assembly and dimerization of PSII. PSII is a light-driven water plastoquinone oxidoreductase, using light energy to abstract electrons from H(2)O, generating a proton gradient subsequently used for ATP formation. This chain is Photosystem II reaction center protein T, found in Synechococcus elongatus (strain ATCC 33912 / PCC 7942 / FACHB-805) (Anacystis nidulans R2).